The chain runs to 142 residues: MARPPPLPGLVGRRSGRAVDRAIGWRLFLLLWHPALGAQARPPRRAPGGRWRSRRVFLLVRRTRAAAYAFAIRRGVVRVVGGGGQLRPAPGEAAGEAGVAGAGLEAWRHPSGPARTQLEGQEGAGGWLVVGFLLCLFLLMPP.

Positions 1–40 (MARPPPLPGLVGRRSGRAVDRAIGWRLFLLLWHPALGAQA) are cleaved as a signal peptide. At 41-123 (RPPRRAPGGR…ARTQLEGQEG (83 aa)) the chain is on the extracellular side. Residues 124–140 (AGGWLVVGFLLCLFLLM) form a helical membrane-spanning segment. The Cytoplasmic portion of the chain corresponds to 141–142 (PP).

Widely expressed in the adult with highest levels in placenta and testis. Also expressed in a number of embryonic tissues at multiple embryonic stages.

The protein resides in the nucleus membrane. The protein localises to the mitochondrion membrane. It localises to the cytoplasm. This Mus musculus (Mouse) protein is Taurine up-regulated 1 protein.